A 207-amino-acid polypeptide reads, in one-letter code: Large ribosomal subunit protein bL25 (207 aa).

Belongs to the bacterial ribosomal protein bL25 family. CTC subfamily. In terms of assembly, part of the 50S ribosomal subunit; part of the 5S rRNA/L5/L18/L25 subcomplex. Contacts the 5S rRNA. Binds to the 5S rRNA independently of L5 and L18.

This is one of the proteins that binds to the 5S RNA in the ribosome where it forms part of the central protuberance. The protein is Large ribosomal subunit protein bL25 of Brucella canis (strain ATCC 23365 / NCTC 10854 / RM-666).